Consider the following 58-residue polypeptide: MFTVFLLVVLVTTVVFSTSDHRPASNHENRRASKRISEMTWEECCTNPVCRQHYMHYC.

Residues Met-1–Ser-17 form the signal peptide. The propeptide occupies Thr-18–Arg-35. 2 disulfides stabilise this stretch: Cys-44-Cys-50 and Cys-45-Cys-58. The segment at Thr-46–Pro-48 is lacks the Ser-Xaa-Pro motif that is crucial for potent interaction with nAChR.

It belongs to the conotoxin A superfamily. In terms of tissue distribution, expressed by the venom duct.

Its subcellular location is the secreted. In terms of biological role, alpha-conotoxins act on postsynaptic membranes, they bind to the nicotinic acetylcholine receptors (nAChR) and thus inhibit them. Has possibly a distinct nAChR binding mode from other alpha-conotoxins, due to a different three residue motif (lacks the Ser-Xaa-Pro motif). The protein is Alpha-conotoxin-like Pu1.6 of Conus pulicarius (Flea-bitten cone).